The sequence spans 555 residues: MKSDIQIAREAQKLPIAQIAGRLGLAEADFLPYGHDKAKIAHEAIAALAGRPQGRLILVTAINPTPAGEGKTTTTVGLGDALNRIGKRATVCIREASLGPNFGMKGGAAGGGHAQIVPMEDMNLHFTGDFHAVTSAHNLLAAMIDNHIHWGNALRIDPRRVTWRRVMDMNDRVLRQVVVALGGPANGVPRECGFDITVASEVMAILCLASDLADLQARLGRIVIGQTFDRRPVTAHDLGAEGAMTVLLRDALQPNLVQTLENNPALVHGGPFANIAHGCNSVMATRTALALSDYVVTEAGFGADLGAEKFLNIKCRLAGLQPAAAVLVATVRALKMNGGVARTDLGAENVAALRAGCANLGRHIQNLRRFGLPVVVAINHFSGDTEAEIAALADYCRERGVQAVLCRHWAEGGKGAEDLARAVVALAEGGADFTPLYPDEMPLAEKIETICHRIYGAGQVEFLPHIVERLEEWQAAGHGHLPVCMAKTQYSFSANPAALGAPEGFTIPVREVRLAAGAGFVVAICGDIMTMPGLPREPSALRIGVDADGHVQGLF.

65 to 72 (TPAGEGKT) lines the ATP pocket.

Belongs to the formate--tetrahydrofolate ligase family.

The enzyme catalyses (6S)-5,6,7,8-tetrahydrofolate + formate + ATP = (6R)-10-formyltetrahydrofolate + ADP + phosphate. It functions in the pathway one-carbon metabolism; tetrahydrofolate interconversion. This Paracoccus denitrificans (strain Pd 1222) protein is Formate--tetrahydrofolate ligase.